A 240-amino-acid chain; its full sequence is Small ribosomal subunit protein uS2 (240 aa).

Belongs to the universal ribosomal protein uS2 family.

This Haemophilus influenzae (strain 86-028NP) protein is Small ribosomal subunit protein uS2.